The chain runs to 229 residues: MKLSFHGQSTIYFEGNGKKVIVDPFISGNDKCDLDEQTLEVDYIILTHGHADHFGDVVELANRNHATVIGSAELQGYLSTYHGVENVHGMNIGGKAKFDFGTVKFVQAFHSSSFTHDNGVPVYLGMPMGIIVEAEGKTIYHTGDTGLFSDMKLIADRHPVDVCFVPIGDNFTMGIEDASYAINEFIKPTISVPIHYNTFPLIEQDPEQFKDAVQVGEVQILKPGESVEF.

The protein belongs to the UPF0173 family.

The polypeptide is UPF0173 metal-dependent hydrolase SERP1270 (Staphylococcus epidermidis (strain ATCC 35984 / DSM 28319 / BCRC 17069 / CCUG 31568 / BM 3577 / RP62A)).